We begin with the raw amino-acid sequence, 255 residues long: MMFNNIISPLEQFEIKDLFSLNINIINLKMSLTNFGFYIIISTIIILTLHLLITYNNKLISNSWTLTKESIYATVHSVVINQINSKEGQNYFPFIYGLFIFILMNNLLGLIPYSFSSTSHFILTFFISFTVVLGATILGFQKHQLKFFSLFVPSGCPLGLLPLLVLIELISYLARNVSLGLRLSANILSGHMLLVILSDFTFKIMSSGIFYFLIGLIPLAFIFAFSGLELGIAFIQSQVFIVLTCSYIRDSLELH.

A propeptide spans 1-7 (removed in mature form); the sequence is MMFNNII. 6 consecutive transmembrane segments (helical) span residues 35–55, 91–111, 120–140, 147–167, 177–197, and 208–228; these read FGFY…LITY, YFPF…LGLI, HFIL…ILGF, FFSL…LVLI, VSLG…LVIL, and GIFY…FSGL.

This sequence belongs to the ATPase A chain family. As to quaternary structure, F-type ATPases have 2 components, CF(1) - the catalytic core - and CF(0) - the membrane proton channel. CF(1) has five subunits: alpha(3), beta(3), gamma(1), delta(1), epsilon(1). CF(0) has three main subunits: a, b and c.

Its subcellular location is the mitochondrion inner membrane. Its function is as follows. Mitochondrial membrane ATP synthase (F(1)F(0) ATP synthase or Complex V) produces ATP from ADP in the presence of a proton gradient across the membrane which is generated by electron transport complexes of the respiratory chain. F-type ATPases consist of two structural domains, F(1) - containing the extramembraneous catalytic core and F(0) - containing the membrane proton channel, linked together by a central stalk and a peripheral stalk. During catalysis, ATP synthesis in the catalytic domain of F(1) is coupled via a rotary mechanism of the central stalk subunits to proton translocation. Key component of the proton channel; it may play a direct role in the translocation of protons across the membrane. This Trichophyton rubrum (Athlete's foot fungus) protein is ATP synthase subunit a (ATP6).